Consider the following 316-residue polypeptide: Galectin-8 (316 aa).

2 consecutive Galectin domains span residues 18–151 and 186–316; these read YVST…IGFR and FEAR…VRSW. Residues Arg68, Asn78, and Glu88 each coordinate a carbohydrate. Residue 248 to 254 coordinates a beta-D-galactoside; sequence WGEEERN.

As to quaternary structure, homodimer. Interacts with CALCOCO2/NDP52. Interacts with PDPN; the interaction is glycosylation-dependent; may participate in connection of the lymphatic endothelium to the surrounding extracellular matrix. In terms of tissue distribution, expressed in liver, kidney, cardiac muscle, lung, and brain.

It is found in the cytoplasmic vesicle. Its subcellular location is the cytoplasm. The protein localises to the cytosol. Beta-galactoside-binding lectin that acts as a sensor of membrane damage caused by infection and restricts the proliferation of infecting pathogens by targeting them for autophagy. Detects membrane rupture by binding beta-galactoside ligands located on the lumenal side of the endosome membrane; these ligands becoming exposed to the cytoplasm following rupture. Restricts infection by initiating autophagy via interaction with CALCOCO2/NDP52. Required to restrict infection of bacterial invasion such as S.typhimurium. Also required to restrict infection of Picornaviridae viruses. Has a marked preference for 3'-O-sialylated and 3'-O-sulfated glycans. The protein is Galectin-8 (Lgals8) of Rattus norvegicus (Rat).